Consider the following 92-residue polypeptide: Probable Fe(2+)-trafficking protein (92 aa).

Belongs to the Fe(2+)-trafficking protein family.

In terms of biological role, could be a mediator in iron transactions between iron acquisition and iron-requiring processes, such as synthesis and/or repair of Fe-S clusters in biosynthetic enzymes. This is Probable Fe(2+)-trafficking protein from Anaeromyxobacter sp. (strain Fw109-5).